The sequence spans 698 residues: Methionine--tRNA ligase (698 aa).

The 'HIGH' region signature appears at 18–28 (PYANGDLHVGH). Residues Cys149, Cys152, Cys161, and Cys165 each coordinate Zn(2+). Thr350 is a binding site for ATP. The segment at 567-590 (EAADAGDEEGEDEDEEPPAADLEP) is disordered. Residues 570 to 584 (DAGDEEGEDEDEEPP) are compositionally biased toward acidic residues. Residues 600 to 698 (DFQDLDIRVA…EDAEPGTKVQ (99 aa)) enclose the tRNA-binding domain.

Belongs to the class-I aminoacyl-tRNA synthetase family. MetG type 1 subfamily. In terms of assembly, homodimer. Requires Zn(2+) as cofactor.

It is found in the cytoplasm. It carries out the reaction tRNA(Met) + L-methionine + ATP = L-methionyl-tRNA(Met) + AMP + diphosphate. Its function is as follows. Is required not only for elongation of protein synthesis but also for the initiation of all mRNA translation through initiator tRNA(fMet) aminoacylation. This Natronomonas pharaonis (strain ATCC 35678 / DSM 2160 / CIP 103997 / JCM 8858 / NBRC 14720 / NCIMB 2260 / Gabara) (Halobacterium pharaonis) protein is Methionine--tRNA ligase.